The chain runs to 445 residues: Glutamate--tRNA ligase 1 (445 aa).

A 'HIGH' region motif is present at residues 9–19; it reads PSPTGYLHVGN. The 'KMSKS' region signature appears at 238-242; the sequence is KISKR. K241 contacts ATP.

This sequence belongs to the class-I aminoacyl-tRNA synthetase family. Glutamate--tRNA ligase type 1 subfamily. As to quaternary structure, monomer.

The protein resides in the cytoplasm. It carries out the reaction tRNA(Glu) + L-glutamate + ATP = L-glutamyl-tRNA(Glu) + AMP + diphosphate. In terms of biological role, catalyzes the attachment of glutamate to tRNA(Glu) in a two-step reaction: glutamate is first activated by ATP to form Glu-AMP and then transferred to the acceptor end of tRNA(Glu). The chain is Glutamate--tRNA ligase 1 from Ehrlichia ruminantium (strain Gardel).